Here is a 150-residue protein sequence, read N- to C-terminus: Transthyretin (150 aa).

The N-terminal stretch at 1 to 20 (MGSSSLLLVCLAGMVYLTEA) is a signal peptide. Cysteine 33 bears the Sulfocysteine mark. Positions 38, 77, and 140 each coordinate L-thyroxine.

It belongs to the transthyretin family. In terms of assembly, homotetramer. Dimer of dimers. In the homotetramer, subunits assemble around a central channel that can accommodate two ligand molecules. Interacts with RBP4. In terms of processing, sulfonation of the reactive cysteine Cys-33 enhances the stability of the native conformation of TTR, avoiding misassembly of the protein leading to amyloid formation. Detected in choroid plexus (at protein level). Detected in choroid plexus.

It is found in the secreted. In terms of biological role, thyroid hormone-binding protein. Probably transports thyroxine from the bloodstream to the brain. The sequence is that of Transthyretin (TTR) from Tiliqua rugosa (Shingleback lizard).